The primary structure comprises 232 residues: uncharacterized protein (232 aa).

Basic and acidic residues predominate over residues 86–95 (RGLPRPEFKA). The disordered stretch occupies residues 86 to 107 (RGLPRPEFKANGHPSMDAEADD).

This is an uncharacterized protein from Sinorhizobium fredii (strain NBRC 101917 / NGR234).